A 410-amino-acid polypeptide reads, in one-letter code: Solute carrier family 52, riboflavin transporter, member 3 (410 aa).

The next 3 membrane-spanning stretches (helical) occupy residues 3–23 (ILIY…INGL), 40–60 (LPSY…LVTL), and 73–93 (VVIY…AFFL). An N-linked (GlcNAc...) asparagine glycan is attached at asparagine 157. 6 consecutive transmembrane segments (helical) span residues 158-178 (FTTE…LAAF), 239-259 (FQLT…NGLL), 277-297 (LSAA…MFFP), 301-321 (LVFL…NMAM), 334-354 (ALGE…LSYV), and 369-389 (ALVW…VIMF).

Belongs to the riboflavin transporter family.

The protein resides in the cell membrane. The enzyme catalyses riboflavin(in) = riboflavin(out). Its function is as follows. Plasma membrane transporter mediating the uptake by cells of the water soluble vitamin B2/riboflavin that plays a key role in biochemical oxidation-reduction reactions of the carbohydrate, lipid, and amino acid metabolism. The polypeptide is Solute carrier family 52, riboflavin transporter, member 3 (slc52a3) (Osmerus mordax (Rainbow smelt)).